A 416-amino-acid polypeptide reads, in one-letter code: Probable glucan 1,3-beta-glucosidase A (416 aa).

The first 22 residues, 1–22 (MIFKFSQKALVALYLVVGLAEA), serve as a signal peptide directing secretion. The active-site Proton donor is glutamate 211. Cystine bridges form between cysteine 291/cysteine 415 and cysteine 316/cysteine 342. The active-site Nucleophile is glutamate 308. A glycan (N-linked (GlcNAc...) asparagine) is linked at asparagine 344.

Belongs to the glycosyl hydrolase 5 (cellulase A) family. As to quaternary structure, monomer. Mn(2+) serves as cofactor.

The protein localises to the secreted. The catalysed reaction is Successive hydrolysis of beta-D-glucose units from the non-reducing ends of (1-&gt;3)-beta-D-glucans, releasing alpha-glucose.. Beta-glucanases participate in the metabolism of beta-glucan, the main structural component of the cell wall. It could also function biosynthetically as a transglycosylase. This is Probable glucan 1,3-beta-glucosidase A (exgA) from Aspergillus fumigatus (strain ATCC MYA-4609 / CBS 101355 / FGSC A1100 / Af293) (Neosartorya fumigata).